The primary structure comprises 104 residues: Gallinacin-11 (104 aa).

The signal sequence occupies residues M1–G22. 3 disulfide bridges follow: C30–C60, C37–C53, and C43–C61.

This sequence belongs to the beta-defensin family. In terms of tissue distribution, detected in outer membrane of the vitelline layer of the egg (at protein level). Expressed in the liver, gall bladder, kidney, testis, ovary and male and female reproductive tracts. Expressed in the ovarian stroma, but not in the ovarian follicles. No expression is detected in bone marrow.

The protein resides in the secreted. It localises to the cytoplasmic granule. Its function is as follows. Has bactericidal activity. This is Gallinacin-11 (GAL11) from Gallus gallus (Chicken).